A 324-amino-acid polypeptide reads, in one-letter code: Concanavalin B (324 aa).

The N-terminal stretch at 1–25 (MGCERKALILMVVIWIMSFWTLSLA) is a signal peptide. The GH18 domain occupies 30-311 (TEIAVYWGQR…TNIIRYLNAT (282 aa)). Asn-309 is a glycosylation site (N-linked (GlcNAc...) asparagine).

Belongs to the glycosyl hydrolase 18 family.

Its function is as follows. May act as a carbohydrate-binding protein. The polypeptide is Concanavalin B (Canavalia ensiformis (Jack bean)).